The following is a 330-amino-acid chain: Probable pectinesterase 55 (330 aa).

An N-terminal signal peptide occupies residues 1–24 (MGTHRIILGLAALCCFCLPHLIEA). N-linked (GlcNAc...) asparagine glycans are attached at residues Asn-38 and Asn-52. Asp-161 (proton donor) is an active-site residue. The Nucleophile role is filled by Asp-182. 2 residues coordinate substrate: Arg-243 and Trp-245. Residues Asn-257 and Asn-292 are each glycosylated (N-linked (GlcNAc...) asparagine).

This sequence belongs to the pectinesterase family.

It is found in the secreted. It localises to the cell wall. It catalyses the reaction [(1-&gt;4)-alpha-D-galacturonosyl methyl ester](n) + n H2O = [(1-&gt;4)-alpha-D-galacturonosyl](n) + n methanol + n H(+). It functions in the pathway glycan metabolism; pectin degradation; 2-dehydro-3-deoxy-D-gluconate from pectin: step 1/5. Acts in the modification of cell walls via demethylesterification of cell wall pectin. The sequence is that of Probable pectinesterase 55 (PME55) from Arabidopsis thaliana (Mouse-ear cress).